Here is a 358-residue protein sequence, read N- to C-terminus: Trace amine-associated receptor 7e (358 aa).

Topologically, residues 1 to 47 (MATGDDSFLWDQDSILSRDLFSATSAELCYENLNRSCVRSPYSPGPR) are extracellular. N-linked (GlcNAc...) asparagine glycosylation is present at asparagine 34. Disulfide bonds link cysteine 37–cysteine 201 and cysteine 120–cysteine 205. Residues 48–68 (LILYAVFGFGAVLAVCGNLLV) form a helical membrane-spanning segment. At 69–83 (MTSILHFRQLHSPAN) the chain is on the cytoplasmic side. A helical membrane pass occupies residues 84-104 (FLVASLACADFLVGLTVMPFS). Residues 105–121 (TVRSVEGCWYFGEIYCK) lie on the Extracellular side of the membrane. The helical transmembrane segment at 122-143 (LHTCFDVSFCSSSIFHLCFISV) threads the bilayer. Topologically, residues 144–166 (DRYIAVSDPLIYPTRFTASVSNK) are cytoplasmic. The chain crosses the membrane as a helical span at residues 167–187 (CITFSWLLSISYGFSLIYTGA). The Extracellular portion of the chain corresponds to 188–212 (SEAGLEDLVSALTCVGGCQLAVNQS). A glycan (N-linked (GlcNAc...) asparagine) is linked at asparagine 210. A helical transmembrane segment spans residues 213-233 (WVFINFLLFLIPTLVMITVYS). At 234 to 274 (KIFLIAKQQAQNIEKMSKQTARASDSYKDRVAKRERKAAKT) the chain is on the cytoplasmic side. The helical transmembrane segment at 275–295 (LGIAVAAFLLSWLPYFIDSFI) threads the bilayer. Residues 296 to 309 (DAFLGFITPTYVYE) are Extracellular-facing. A helical transmembrane segment spans residues 310–333 (ILVWIAYYNSAMNPLIYAFFYPWF). Residues 334 to 358 (RKAIKLTVTGKILRENSSTTNLFPE) lie on the Cytoplasmic side of the membrane.

This sequence belongs to the G-protein coupled receptor 1 family. As to expression, specifically expressed in neurons of the olfactory epithelium.

It is found in the cell membrane. Functionally, olfactory receptor specific for N,N-dimethylalkylamines trace amines. Trace amine compounds are enriched in animal body fluids and act on trace amine-associated receptors (TAARs) to elicit both intraspecific and interspecific innate behaviors. Ligand-binding causes a conformation change that triggers signaling via G(s)-class of G alpha proteins (GNAL or GNAS). This chain is Trace amine-associated receptor 7e, found in Mus musculus (Mouse).